Reading from the N-terminus, the 257-residue chain is MAKLVNKLVDSFDHDEAPAPDVGCVRAVLAELVLTFLFVFTGVSASMAAGAGGKPGEAMPMATLAAVAIAHALAAGVLVTAGFHVSGGHLNPAVTVGILVRGHITKLRALLYVAAQLLASSLACILLRYLSGGMVTPVHALGAGIRPMQGLVMEVILTFSLLFVTYAMILDPRSQVRTIGPLLTGLIVGANSLAGGNFTGASMNPARSFGPAMATGVWTNHWVYWIGPLLGGSLAGFVYESLFMVNKTHEPLLNGDI.

2 helical membrane passes run 32–52 and 63–83; these read LVLT…AGAG and TLAA…TAGF. An NPA 1 motif is present at residues 91–93; the sequence is NPA. 3 helical membrane passes run 107-127, 150-170, and 178-198; these read LRAL…CILL, GLVM…AMIL, and TIGP…GGNF. Residues 204 to 206 carry the NPA 2 motif; it reads NPA. The chain crosses the membrane as a helical span at residues 225-245; that stretch reads WIGPLLGGSLAGFVYESLFMV.

Belongs to the MIP/aquaporin (TC 1.A.8) family. TIP (TC 1.A.8.10) subfamily.

The protein localises to the vacuole membrane. Functionally, aquaporins facilitate the transport of water and small neutral solutes across cell membranes. The sequence is that of Aquaporin TIP4-2 (TIP4-2) from Zea mays (Maize).